The primary structure comprises 199 residues: UPF0301 protein Vapar_4617 (199 aa).

Belongs to the UPF0301 (AlgH) family.

This chain is UPF0301 protein Vapar_4617, found in Variovorax paradoxus (strain S110).